The sequence spans 403 residues: MVQSVLSSTSHGSERADMSAASPQGFHCWTTHLGLADEGKDDFSMVISDRPCTSSVVFTKSLFAGPCVTLSKTSIEQTSPRGVLVLAKNANVATGAEGLRNASEIRASVARTVGIEPDALIMASTGVIGVQYPMDTIRAGLDGLGQGTPLDAHAVARAIMTTDTRAKVSERAVGTSTIVGIAKGVGMIEPDMATMLSFVFTDADVPQDTLNRIFRDVVDRTYNSVSIDTDTSTSDTAAVFANGSAGPVPDTEFEQALEEVCTDLVKMIASDGEGATKLIVTTVSGASSERQARVVGKSIINSPLVKTMIHGEDPNWGRVLMAIGKCSNEVDIEPDRIRVAFADIDVYPSSSLDQHDTVEVVREHLATVTVEINVDLGIGTDTWRVFGCDLTDEYIRINADYTT.

A compositionally biased stretch (polar residues) spans 1-11 (MVQSVLSSTSH). Residues 1 to 21 (MVQSVLSSTSHGSERADMSAA) form a disordered region. Substrate is bound by residues Thr161, Lys183, Thr194, Glu273, Asn398, and Thr403. Thr194 (nucleophile) is an active-site residue.

It belongs to the ArgJ family. Heterotetramer of two alpha and two beta chains.

The protein resides in the cytoplasm. It carries out the reaction N(2)-acetyl-L-ornithine + L-glutamate = N-acetyl-L-glutamate + L-ornithine. The enzyme catalyses L-glutamate + acetyl-CoA = N-acetyl-L-glutamate + CoA + H(+). It participates in amino-acid biosynthesis; L-arginine biosynthesis; L-ornithine and N-acetyl-L-glutamate from L-glutamate and N(2)-acetyl-L-ornithine (cyclic): step 1/1. Its pathway is amino-acid biosynthesis; L-arginine biosynthesis; N(2)-acetyl-L-ornithine from L-glutamate: step 1/4. Catalyzes two activities which are involved in the cyclic version of arginine biosynthesis: the synthesis of N-acetylglutamate from glutamate and acetyl-CoA as the acetyl donor, and of ornithine by transacetylation between N(2)-acetylornithine and glutamate. The protein is Arginine biosynthesis bifunctional protein ArgJ of Rhodococcoides fascians (Rhodococcus fascians).